The chain runs to 327 residues: Methionyl-tRNA formyltransferase (327 aa).

121–124 (SLLP) contributes to the (6S)-5,6,7,8-tetrahydrofolate binding site.

This sequence belongs to the Fmt family.

It catalyses the reaction L-methionyl-tRNA(fMet) + (6R)-10-formyltetrahydrofolate = N-formyl-L-methionyl-tRNA(fMet) + (6S)-5,6,7,8-tetrahydrofolate + H(+). In terms of biological role, attaches a formyl group to the free amino group of methionyl-tRNA(fMet). The formyl group appears to play a dual role in the initiator identity of N-formylmethionyl-tRNA by promoting its recognition by IF2 and preventing the misappropriation of this tRNA by the elongation apparatus. This chain is Methionyl-tRNA formyltransferase, found in Burkholderia pseudomallei (strain 668).